The chain runs to 381 residues: Sensor histidine kinase FlgS (381 aa).

Positions histidine 177–serine 381 constitute a Histidine kinase domain. Histidine 180 is modified (phosphohistidine; by autocatalysis).

As to quaternary structure, interacts (via its C-terminal kinase domain) with FlhA (via N-terminus). Autophosphorylated.

The catalysed reaction is ATP + protein L-histidine = ADP + protein N-phospho-L-histidine.. In terms of biological role, member of the two-component regulatory system FlgR/FlgS that induces the transcriptional induction of the genes needed in motility and flagellar biogenesis. Also plays an essential role in bacterial survival at pH 2.5 independently of FlgR. Functions as a sensor protein kinase which is autophosphorylated at a histidine residue and transfers its phosphate group to the conserved aspartic acid residue in the regulatory domain of FlgR. In turn, FlgR functions as a transcriptional regulator initiating transcription from RpoN-dependent promoters. This is Sensor histidine kinase FlgS (flgS) from Helicobacter pylori (strain ATCC 700392 / 26695) (Campylobacter pylori).